The sequence spans 199 residues: N-(5'-phosphoribosyl)anthranilate isomerase (199 aa).

It belongs to the TrpF family.

It catalyses the reaction N-(5-phospho-beta-D-ribosyl)anthranilate = 1-(2-carboxyphenylamino)-1-deoxy-D-ribulose 5-phosphate. The protein operates within amino-acid biosynthesis; L-tryptophan biosynthesis; L-tryptophan from chorismate: step 3/5. This chain is N-(5'-phosphoribosyl)anthranilate isomerase, found in Streptococcus pneumoniae serotype 19F (strain G54).